The chain runs to 466 residues: Cell division protein FtsP (466 aa).

The segment at residues 1–28 is a signal peptide (tat-type signal); sequence MGNYSRRRFLQGSLAIVAGNVLPCAAMA.

The protein belongs to the FtsP family. Predicted to be exported by the Tat system. The position of the signal peptide cleavage has not been experimentally proven.

The protein resides in the periplasm. Functionally, cell division protein that is required for growth during stress conditions. May be involved in protecting or stabilizing the divisomal assembly under conditions of stress. This chain is Cell division protein FtsP, found in Gallibacterium anatis (strain UMN179) (Pasteurella anatis).